We begin with the raw amino-acid sequence, 101 residues long: Small ribosomal subunit protein uS14 (101 aa).

Residues 46 to 72 (FELNRQPRDASPVRVRNRDSRDGRPRG) are disordered. Positions 61 to 70 (RNRDSRDGRP) are enriched in basic and acidic residues.

It belongs to the universal ribosomal protein uS14 family. In terms of assembly, part of the 30S ribosomal subunit. Contacts proteins S3 and S10.

Functionally, binds 16S rRNA, required for the assembly of 30S particles and may also be responsible for determining the conformation of the 16S rRNA at the A site. This chain is Small ribosomal subunit protein uS14, found in Corynebacterium diphtheriae (strain ATCC 700971 / NCTC 13129 / Biotype gravis).